The sequence spans 481 residues: Leukocyte immunoglobulin-like receptor subfamily A member 6 (481 aa).

The first 23 residues, 1-23, serve as a signal peptide directing secretion; it reads MTPALTALLCLGLSLGPRTRVQA. Residues 24 to 447 lie on the Extracellular side of the membrane; that stretch reads GPFPKPTLWA…SHAKDYTVEN (424 aa). Cysteines 49 and 98 form a disulfide. Over residues 59 to 70 the composition is skewed to basic and acidic residues; sequence QLDKEGSPEPLD. The tract at residues 59-78 is disordered; the sequence is QLDKEGSPEPLDRNNPLEPK. Asparagine 139 carries an N-linked (GlcNAc...) asparagine glycan. Cystine bridges form between cysteine 144/cysteine 196 and cysteine 245/cysteine 296. Ig-like C2-type domains follow at residues 225–314 and 323–408; these read PSLL…DPLN and DTVS…HLLS. 2 N-linked (GlcNAc...) asparagine glycosylation sites follow: asparagine 301 and asparagine 340. The cysteines at positions 345 and 396 are disulfide-linked. Residues 419–439 form a disordered region; sequence SGHSGGSSLPPTGPPSTPASH. A helical transmembrane segment spans residues 448 to 468; that stretch reads LIRMGMAGLVLVFLGILLFEA. The Cytoplasmic portion of the chain corresponds to 469 to 481; the sequence is QHSQRNPQDAAGR.

Its subcellular location is the membrane. In terms of biological role, may act as receptor for class I MHC antigens. In Homo sapiens (Human), this protein is Leukocyte immunoglobulin-like receptor subfamily A member 6 (LILRA6).